The sequence spans 90 residues: Acylphosphatase (90 aa).

Residues 3-90 (QYRIIVDGRV…DGFQKFNISY (88 aa)) form the Acylphosphatase-like domain. Residues Arg-18 and Asn-36 contribute to the active site.

This sequence belongs to the acylphosphatase family.

The catalysed reaction is an acyl phosphate + H2O = a carboxylate + phosphate + H(+). The protein is Acylphosphatase (acyP) of Bacillus licheniformis (strain ATCC 14580 / DSM 13 / JCM 2505 / CCUG 7422 / NBRC 12200 / NCIMB 9375 / NCTC 10341 / NRRL NRS-1264 / Gibson 46).